A 371-amino-acid polypeptide reads, in one-letter code: ADP-ribosylarginine hydrolase Tri1 (371 aa).

The tract at residues 1–61 (MIDLRSPNAL…LQSRACTLTP (61 aa)) is N-terminal extension. Residues 70–362 (GALLGLAIGD…LFDRAPQVDE (293 aa)) form an ADP-ribosyl hydrolase domain region. Residues threonine 112, aspartate 113, aspartate 114, aspartate 157, and aspartate 313 each coordinate Mg(2+).

The protein belongs to the ADP-ribosylglycohydrolase family. Mg(2+) serves as cofactor.

The catalysed reaction is N(omega)-(ADP-D-ribosyl)-L-arginyl-[protein] + H2O = ADP-D-ribose + L-arginyl-[protein]. Its function is as follows. Immunity component of an interbacterial competition system (also called effector-immunity systems). Expression in E.coli neutralizes the toxic effects of non-cognate S.proteamaculans effector protein Tre1 (Tre1-Sp); cannot be co-purified with Tre1-Sp from E.coli, suggesting they do not form a stable complex. Probably acts as an arginine mono-ADP-ribosylhydrolase, mediating the removal of mono-ADP-ribose attached to arginine residues on proteins. Probably de-ADP-ribosylates FtsZ and possibly other proteins; the ability to hydrolyze ADP-ribosyl moieties is not essential for neutralization of its cognate toxin, strongly suggesting its N-terminal extension occludes the active site of cognate toxin Tre1. The sequence is that of ADP-ribosylarginine hydrolase Tri1 from Pseudomonas putida (strain GB-1).